The following is a 507-amino-acid chain: ATP synthase subunit alpha, chloroplastic (507 aa).

170–177 (GDRQTGKT) provides a ligand contact to ATP.

This sequence belongs to the ATPase alpha/beta chains family. As to quaternary structure, F-type ATPases have 2 components, CF(1) - the catalytic core - and CF(0) - the membrane proton channel. CF(1) has five subunits: alpha(3), beta(3), gamma(1), delta(1), epsilon(1). CF(0) has four main subunits: a, b, b' and c.

It is found in the plastid. It localises to the chloroplast thylakoid membrane. The catalysed reaction is ATP + H2O + 4 H(+)(in) = ADP + phosphate + 5 H(+)(out). In terms of biological role, produces ATP from ADP in the presence of a proton gradient across the membrane. The alpha chain is a regulatory subunit. The protein is ATP synthase subunit alpha, chloroplastic of Nicotiana tomentosiformis (Tobacco).